Consider the following 137-residue polypeptide: ATP synthase epsilon chain (137 aa).

This sequence belongs to the ATPase epsilon chain family. In terms of assembly, F-type ATPases have 2 components, CF(1) - the catalytic core - and CF(0) - the membrane proton channel. CF(1) has five subunits: alpha(3), beta(3), gamma(1), delta(1), epsilon(1). CF(0) has three main subunits: a, b and c.

It localises to the cell inner membrane. In terms of biological role, produces ATP from ADP in the presence of a proton gradient across the membrane. In Magnetococcus marinus (strain ATCC BAA-1437 / JCM 17883 / MC-1), this protein is ATP synthase epsilon chain.